The chain runs to 1226 residues: DNA-directed RNA polymerase subunit beta'' (1226 aa).

C223, C297, C304, and C307 together coordinate Zn(2+).

This sequence belongs to the RNA polymerase beta' chain family. RpoC2 subfamily. As to quaternary structure, in plastids the minimal PEP RNA polymerase catalytic core is composed of four subunits: alpha, beta, beta', and beta''. When a (nuclear-encoded) sigma factor is associated with the core the holoenzyme is formed, which can initiate transcription. Zn(2+) serves as cofactor.

The protein localises to the plastid. It localises to the chloroplast. It carries out the reaction RNA(n) + a ribonucleoside 5'-triphosphate = RNA(n+1) + diphosphate. DNA-dependent RNA polymerase catalyzes the transcription of DNA into RNA using the four ribonucleoside triphosphates as substrates. The sequence is that of DNA-directed RNA polymerase subunit beta'' from Pyropia yezoensis (Susabi-nori).